The following is a 196-amino-acid chain: MIPVVIEQTSRGERSYDIYSRLLKDRIIMLTGPIEDNMANSIIAQLLFLDAQDNTKDIYLYVNTPGGSVSAGLAIVDTMNFIKSDVQTIVMGMAASMGTIIASSGTKGKRFMLPNAEYMIHQPMGGTGGGTQQTDMAIAAEHLLKTRNNLEQILADNSGQPIEKVHVDAERDNWMSAQETLEYGFIDEIMTNNQLK.

Catalysis depends on serine 96, which acts as the Nucleophile. Residue histidine 121 is part of the active site.

This sequence belongs to the peptidase S14 family. Fourteen ClpP subunits assemble into 2 heptameric rings which stack back to back to give a disk-like structure with a central cavity, resembling the structure of eukaryotic proteasomes.

Its subcellular location is the cytoplasm. The catalysed reaction is Hydrolysis of proteins to small peptides in the presence of ATP and magnesium. alpha-casein is the usual test substrate. In the absence of ATP, only oligopeptides shorter than five residues are hydrolyzed (such as succinyl-Leu-Tyr-|-NHMec, and Leu-Tyr-Leu-|-Tyr-Trp, in which cleavage of the -Tyr-|-Leu- and -Tyr-|-Trp bonds also occurs).. In terms of biological role, cleaves peptides in various proteins in a process that requires ATP hydrolysis. Has a chymotrypsin-like activity. Plays a major role in the degradation of misfolded proteins. This is ATP-dependent Clp protease proteolytic subunit from Streptococcus thermophilus (strain CNRZ 1066).